Reading from the N-terminus, the 310-residue chain is tRNA dimethylallyltransferase (310 aa).

14–21 (GPTASGKT) contacts ATP. Residue 16-21 (TASGKT) participates in substrate binding. Interaction with substrate tRNA regions lie at residues 39 to 42 (DSAL), 163 to 167 (QRLSR), and 244 to 249 (RCVGYR).

Belongs to the IPP transferase family. In terms of assembly, monomer. Requires Mg(2+) as cofactor.

The enzyme catalyses adenosine(37) in tRNA + dimethylallyl diphosphate = N(6)-dimethylallyladenosine(37) in tRNA + diphosphate. Its function is as follows. Catalyzes the transfer of a dimethylallyl group onto the adenine at position 37 in tRNAs that read codons beginning with uridine, leading to the formation of N6-(dimethylallyl)adenosine (i(6)A). This is tRNA dimethylallyltransferase from Aeromonas salmonicida (strain A449).